Reading from the N-terminus, the 350-residue chain is Protein RecA (350 aa).

66–73 (GPESSGKT) serves as a coordination point for ATP.

The protein belongs to the RecA family.

The protein resides in the cytoplasm. Its function is as follows. Can catalyze the hydrolysis of ATP in the presence of single-stranded DNA, the ATP-dependent uptake of single-stranded DNA by duplex DNA, and the ATP-dependent hybridization of homologous single-stranded DNAs. It interacts with LexA causing its activation and leading to its autocatalytic cleavage. This Nocardioides sp. (strain ATCC BAA-499 / JS614) protein is Protein RecA.